The primary structure comprises 290 residues: uncharacterized protein (290 aa).

The stretch at 161-216 (SNQREVESLEQLVHEQLNKLNTESKMEFENRKNDTKNEVQQLSARIVELHNLLAVS) forms a coiled coil. A helical transmembrane segment spans residues 236–256 (AGVVMAFTGFLVLVIPFGLGV).

Its subcellular location is the mitochondrion membrane. This is an uncharacterized protein from Schizosaccharomyces pombe (strain 972 / ATCC 24843) (Fission yeast).